The chain runs to 460 residues: GTPase Der (460 aa).

EngA-type G domains are found at residues 2–166 and 175–353; these read KTIA…AEER and TRIA…QERK. GTP contacts are provided by residues 8–15, 55–59, 118–121, 181–188, 228–232, and 293–296; these read GRPNVGKS, DTGGL, NKLD, GQPNAGKS, DTAGL, and NKID. A KH-like domain is found at 354 to 446; that stretch reads KRIPTHRLTQ…LLWKWRKAEG (93 aa).

This sequence belongs to the TRAFAC class TrmE-Era-EngA-EngB-Septin-like GTPase superfamily. EngA (Der) GTPase family. In terms of assembly, associates with the 50S ribosomal subunit.

Its function is as follows. GTPase that plays an essential role in the late steps of ribosome biogenesis. This is GTPase Der from Methylacidiphilum infernorum (isolate V4) (Methylokorus infernorum (strain V4)).